The chain runs to 400 residues: Elongation factor Tu 1 (400 aa).

The tr-type G domain maps to K10–Q209. The tract at residues G19–T26 is G1. G19–T26 contacts GTP. Residue T26 coordinates Mg(2+). Residues G60–N64 form a G2 region. Positions D81–G84 are G3. GTP is bound by residues D81–H85 and N136–D139. A G4 region spans residues N136 to D139. A G5 region spans residues S174–L176.

The protein belongs to the TRAFAC class translation factor GTPase superfamily. Classic translation factor GTPase family. EF-Tu/EF-1A subfamily. Monomer.

The protein resides in the cytoplasm. It carries out the reaction GTP + H2O = GDP + phosphate + H(+). Functionally, GTP hydrolase that promotes the GTP-dependent binding of aminoacyl-tRNA to the A-site of ribosomes during protein biosynthesis. The sequence is that of Elongation factor Tu 1 from Syntrophomonas wolfei subsp. wolfei (strain DSM 2245B / Goettingen).